Consider the following 160-residue polypeptide: UPF0225 protein PputW619_1140 (160 aa).

Belongs to the UPF0225 family.

The protein is UPF0225 protein PputW619_1140 of Pseudomonas putida (strain W619).